The primary structure comprises 340 residues: Mitochondrial import receptor subunit TOM40 homolog 2 (340 aa).

The interval 1 to 37 (MGNVMASTADAESSRGRGHLSAGLRLPEAPQYSGGVP) is disordered.

This sequence belongs to the Tom40 family. In terms of assembly, forms part of the preprotein translocase of the outer mitochondrial membrane (TOM complex). Interacts with mitochondrial targeting sequences. As to expression, only expressed in the male germline, detected in primary spermatocytes as well as post-meiotic stages. Not detected in stem cells and spermatogonia near the tip of the testis.

It is found in the mitochondrion outer membrane. In terms of biological role, channel-forming protein essential for import of protein precursors into mitochondria. This chain is Mitochondrial import receptor subunit TOM40 homolog 2, found in Drosophila melanogaster (Fruit fly).